A 429-amino-acid polypeptide reads, in one-letter code: Tol-Pal system protein TolB (429 aa).

An N-terminal signal peptide occupies residues 1–28; that stretch reads MSITPSFSRRSVVSLLAAGAFSSMSAFA.

The protein belongs to the TolB family. As to quaternary structure, the Tol-Pal system is composed of five core proteins: the inner membrane proteins TolA, TolQ and TolR, the periplasmic protein TolB and the outer membrane protein Pal. They form a network linking the inner and outer membranes and the peptidoglycan layer.

The protein resides in the periplasm. Its function is as follows. Part of the Tol-Pal system, which plays a role in outer membrane invagination during cell division and is important for maintaining outer membrane integrity. The sequence is that of Tol-Pal system protein TolB from Polaromonas naphthalenivorans (strain CJ2).